A 511-amino-acid chain; its full sequence is Putative polyol transporter 2 (511 aa).

Helical transmembrane passes span 25-45 (FAFA…YDIG), 63-83 (VQLE…SGAA), 94-114 (YTIV…GFAT), 117-137 (PFIM…MMIA), 156-176 (FPEI…YFFA), 186-206 (FMLG…LAMP), 284-304 (ILIA…DAVV), 324-344 (LATV…TCLV), 351-371 (ALLL…GTSL), 384-404 (WAIG…SLGA), 424-444 (GASL…MTFL), and 454-474 (GAFL…FTFL).

It belongs to the major facilitator superfamily. Sugar transporter (TC 2.A.1.1) family.

It is found in the membrane. Its function is as follows. Plasma membrane sugar-proton symporter. The sequence is that of Putative polyol transporter 2 (PLT2) from Arabidopsis thaliana (Mouse-ear cress).